Here is a 498-residue protein sequence, read N- to C-terminus: MPWEFLKKCDRQKAEVRGEKEEQEPVPGNPHFQVQFHVTSCRFAFLAFLAGSFLAFSLHALISSNLFWRLRQLHHLPTAHYLQTRDEFAVYSVDELNAFKEFYDKSTADSVGATYTEAEETNIKEALSSLRLAQDMYMAGKDDKAARLFEHALALAPRHPEVLLRYGEFLEHNQRNIVLADQYYFQALTINPSHSEALANRQRTADVVQTLDERRLASLDAKRAALSAIHEANSALRRAKKEAYFQHIYHSVGIEGNTMTLAQTRSILETRMAVDGKSIDEHNEILGMDLAMKYINASLVQKLEITIKDILELHRRVLGHVDPIEGGEFRRNQVYVGGHVPPGPGDLAVLMQRFEDWLNSEYSSSLHPVNYAALAHYKLVHIHPFIDGNGRTSRLLMNTLLMRAGYPPVIIPKQQRSKYYHFLKLANEGDIRPFVRFIADCTEKTLDLYLWATSDLPQQIPMLIQTETEAGEQLVKLQSPQMASIPESFYESGSGALP.

The chain crosses the membrane as a helical span at residues 43-63 (FAFLAFLAGSFLAFSLHALIS). TPR repeat units follow at residues 126 to 159 (ALSS…APRH) and 160 to 194 (PEVL…NPSH). The Inhibitory (S/T)XXXE(G/N) motif motif lies at 251–256 (SVGIEG). Residues glutamate 255 and 336-339 (VGGH) each bind ATP. Residues 305–440 (ITIKDILELH…IRPFVRFIAD (136 aa)) form the Fido domain. The active site involves histidine 383. ATP-binding positions include 387-394 (DGNGRTSR), 419-420 (YY), and asparagine 427.

It belongs to the fic family. In terms of assembly, homodimer.

The protein resides in the membrane. It catalyses the reaction L-tyrosyl-[protein] + ATP = O-(5'-adenylyl)-L-tyrosyl-[protein] + diphosphate. The catalysed reaction is L-threonyl-[protein] + ATP = 3-O-(5'-adenylyl)-L-threonyl-[protein] + diphosphate. The enzyme catalyses 3-O-(5'-adenylyl)-L-threonyl-[protein] + H2O = L-threonyl-[protein] + AMP + H(+). Its activity is regulated as follows. The side chain of Glu-255 determines which of the two opposing activities (AMPylase or de-AMPylase) will take place. In response to endoplasmic reticulum stress, mediates de-AMPylase activity. Adenylyltransferase activity is inhibited by the inhibitory helix present at the N-terminus: Glu-255 binds ATP and competes with ATP-binding at Arg-394, thereby preventing adenylyltransferase activity. In unstressed cells, disengagement of Glu-255 promotes adenylyltransferase activity. Activation dissociates ATP-binding from Glu-255, allowing ordered binding of the entire ATP moiety with the alpha-phosphate in an orientation that is productive for accepting an incoming target hydroxyl side chain. Protein that can both mediate the addition of adenosine 5'-monophosphate (AMP) to specific residues of target proteins (AMPylation), and the removal of the same modification from target proteins (de-AMPylation), depending on the context. The side chain of Glu-255 determines which of the two opposing activities (AMPylase or de-AMPylase) will take place. Acts as a key regulator of the unfolded protein response (UPR) by mediating AMPylation or de-AMPylation of Hsc70-3/BiP. In unstressed cells, acts as an adenylyltransferase by mediating AMPylation of Hsc70-3/BiP at 'Thr-518', thereby inactivating it. In response to endoplasmic reticulum stress, acts as a phosphodiesterase by mediating removal of ATP (de-AMPylation) from Hsc70-3/BiP at 'Thr-518', leading to restore HSPA5/BiP activity. The protein is Protein adenylyltransferase Fic of Drosophila willistoni (Fruit fly).